A 66-amino-acid polypeptide reads, in one-letter code: Small ribosomal subunit protein bS21 (66 aa).

This sequence belongs to the bacterial ribosomal protein bS21 family.

This chain is Small ribosomal subunit protein bS21, found in Rickettsia felis (strain ATCC VR-1525 / URRWXCal2) (Rickettsia azadi).